Consider the following 173-residue polypeptide: Ribosome maturation factor RimM (173 aa).

A PRC barrel domain is found at 96-169 (PDEFYDHQLE…LITIDPPDGL (74 aa)).

It belongs to the RimM family. In terms of assembly, binds ribosomal protein uS19.

It is found in the cytoplasm. Its function is as follows. An accessory protein needed during the final step in the assembly of 30S ribosomal subunit, possibly for assembly of the head region. Essential for efficient processing of 16S rRNA. May be needed both before and after RbfA during the maturation of 16S rRNA. It has affinity for free ribosomal 30S subunits but not for 70S ribosomes. In Mycolicibacterium gilvum (strain PYR-GCK) (Mycobacterium gilvum (strain PYR-GCK)), this protein is Ribosome maturation factor RimM.